We begin with the raw amino-acid sequence, 71 residues long: Translation initiation factor IF-1 (71 aa).

Residues 1–71 (MSKDDLIQFT…LTKGRVIHRH (71 aa)) enclose the S1-like domain.

This sequence belongs to the IF-1 family. In terms of assembly, component of the 30S ribosomal translation pre-initiation complex which assembles on the 30S ribosome in the order IF-2 and IF-3, IF-1 and N-formylmethionyl-tRNA(fMet); mRNA recruitment can occur at any time during PIC assembly.

It localises to the cytoplasm. Its function is as follows. One of the essential components for the initiation of protein synthesis. Stabilizes the binding of IF-2 and IF-3 on the 30S subunit to which N-formylmethionyl-tRNA(fMet) subsequently binds. Helps modulate mRNA selection, yielding the 30S pre-initiation complex (PIC). Upon addition of the 50S ribosomal subunit IF-1, IF-2 and IF-3 are released leaving the mature 70S translation initiation complex. In Rickettsia conorii (strain ATCC VR-613 / Malish 7), this protein is Translation initiation factor IF-1.